The sequence spans 592 residues: Arginine--tRNA ligase (592 aa).

The 'HIGH' region motif lies at 123-133; that stretch reads PNTNKPLHLGH.

This sequence belongs to the class-I aminoacyl-tRNA synthetase family. Monomer.

It is found in the cytoplasm. The enzyme catalyses tRNA(Arg) + L-arginine + ATP = L-arginyl-tRNA(Arg) + AMP + diphosphate. In Flavobacterium johnsoniae (strain ATCC 17061 / DSM 2064 / JCM 8514 / BCRC 14874 / CCUG 350202 / NBRC 14942 / NCIMB 11054 / UW101) (Cytophaga johnsonae), this protein is Arginine--tRNA ligase.